The following is a 121-amino-acid chain: Large ribosomal subunit protein bL12 (121 aa).

This sequence belongs to the bacterial ribosomal protein bL12 family. In terms of assembly, homodimer. Part of the ribosomal stalk of the 50S ribosomal subunit. Forms a multimeric L10(L12)X complex, where L10 forms an elongated spine to which 2 to 4 L12 dimers bind in a sequential fashion. Binds GTP-bound translation factors.

In terms of biological role, forms part of the ribosomal stalk which helps the ribosome interact with GTP-bound translation factors. Is thus essential for accurate translation. This chain is Large ribosomal subunit protein bL12, found in Mesomycoplasma hyopneumoniae (strain 232) (Mycoplasma hyopneumoniae).